Consider the following 178-residue polypeptide: Large ribosomal subunit protein uL6 (178 aa).

It belongs to the universal ribosomal protein uL6 family. As to quaternary structure, part of the 50S ribosomal subunit.

This protein binds to the 23S rRNA, and is important in its secondary structure. It is located near the subunit interface in the base of the L7/L12 stalk, and near the tRNA binding site of the peptidyltransferase center. This Kocuria rhizophila (strain ATCC 9341 / DSM 348 / NBRC 103217 / DC2201) protein is Large ribosomal subunit protein uL6.